Reading from the N-terminus, the 264-residue chain is B3-hordein (264 aa).

Residues 1–15 (QQPVSRQPQQIIPQQ) are compositionally biased toward low complexity. Positions 1-66 (QQPVSRQPQQ…QQPFPQQPPF (66 aa)) are disordered. Composition is skewed to pro residues over residues 16 to 44 (PQQP…PYPQ) and 52 to 64 (QPFP…PQQP).

The protein belongs to the gliadin/glutenin family. Developing endosperm.

Functionally, sulfur-rich seed storage protein. The sequence is that of B3-hordein from Hordeum vulgare (Barley).